The following is an 873-amino-acid chain: Alanine--tRNA ligase (873 aa).

4 residues coordinate Zn(2+): histidine 562, histidine 566, cysteine 666, and histidine 670.

This sequence belongs to the class-II aminoacyl-tRNA synthetase family. Zn(2+) serves as cofactor.

The protein resides in the cytoplasm. It catalyses the reaction tRNA(Ala) + L-alanine + ATP = L-alanyl-tRNA(Ala) + AMP + diphosphate. In terms of biological role, catalyzes the attachment of alanine to tRNA(Ala) in a two-step reaction: alanine is first activated by ATP to form Ala-AMP and then transferred to the acceptor end of tRNA(Ala). Also edits incorrectly charged Ser-tRNA(Ala) and Gly-tRNA(Ala) via its editing domain. This Dichelobacter nodosus (strain VCS1703A) protein is Alanine--tRNA ligase.